The sequence spans 177 residues: ATP synthase subunit b (177 aa).

A helical membrane pass occupies residues 19–39 (LFPNLPNFIAHVIATIVLVVI).

It belongs to the ATPase B chain family. As to quaternary structure, F-type ATPases have 2 components, F(1) - the catalytic core - and F(0) - the membrane proton channel. F(1) has five subunits: alpha(3), beta(3), gamma(1), delta(1), epsilon(1). F(0) has three main subunits: a(1), b(2) and c(10-14). The alpha and beta chains form an alternating ring which encloses part of the gamma chain. F(1) is attached to F(0) by a central stalk formed by the gamma and epsilon chains, while a peripheral stalk is formed by the delta and b chains.

Its subcellular location is the cell membrane. Its function is as follows. F(1)F(0) ATP synthase produces ATP from ADP in the presence of a proton or sodium gradient. F-type ATPases consist of two structural domains, F(1) containing the extramembraneous catalytic core and F(0) containing the membrane proton channel, linked together by a central stalk and a peripheral stalk. During catalysis, ATP synthesis in the catalytic domain of F(1) is coupled via a rotary mechanism of the central stalk subunits to proton translocation. In terms of biological role, component of the F(0) channel, it forms part of the peripheral stalk, linking F(1) to F(0). This is ATP synthase subunit b from Mesoplasma florum (strain ATCC 33453 / NBRC 100688 / NCTC 11704 / L1) (Acholeplasma florum).